A 309-amino-acid chain; its full sequence is Malate dehydrogenase (309 aa).

Residues 10-15 and aspartate 34 contribute to the NAD(+) site; that span reads GAGNVG. The substrate site is built by arginine 83 and arginine 89. Residues asparagine 96 and 119–121 contribute to the NAD(+) site; that span reads VSN. Residues asparagine 121 and arginine 152 each coordinate substrate. Histidine 176 (proton acceptor) is an active-site residue.

The protein belongs to the LDH/MDH superfamily. MDH type 3 family.

The catalysed reaction is (S)-malate + NAD(+) = oxaloacetate + NADH + H(+). Catalyzes the reversible oxidation of malate to oxaloacetate. The protein is Malate dehydrogenase of Heliobacterium modesticaldum (strain ATCC 51547 / Ice1).